A 500-amino-acid chain; its full sequence is Versicolorin B desaturase (500 aa).

Residues 3-23 (FLSLPSLVIVIPVGYLLFHLG) traverse the membrane as a helical segment. Residues Asn243 and Asn400 are each glycosylated (N-linked (GlcNAc...) asparagine). Cys438 is a binding site for heme.

Belongs to the cytochrome P450 family. The cofactor is heme.

The protein localises to the membrane. It carries out the reaction versicolorin B + NADPH + O2 + H(+) = versicolorin A + NADP(+) + 2 H2O. It participates in mycotoxin biosynthesis; aflatoxin biosynthesis. Its function is as follows. Versicolorin B desaturase; part of the gene cluster that mediates the biosynthesis of aflatoxins, a group of polyketide-derived furanocoumarins, and part of the most toxic and carcinogenic compounds among the known mycotoxins. The four major aflatoxins produced by A.parasiticus are aflatoxin B1 (AFB1), aflatoxin B2 (AFB2), aflatoxin G1 (AFG1) and aflatoxin G2 (AFG2). Within the aflatoxin pathway, the versicolorin B desaturase aflL catalyzes the conversion of versicolorin B (VERB) to versicolorin A (VERA). The biosynthesis of aflatoxins begins with the norsolorinic acid synthase aflC that combines a hexanoyl starter unit produced by the fatty acid synthase aflA/aflB and 7 malonyl-CoA extender units to synthesize the precursor NOR. The second step is the conversion of NOR to averantin and requires the norsolorinic acid ketoreductase aflD, which catalyzes the dehydration of norsolorinic acid to form (1'S)-averantin. The norsolorinic acid reductases aflE and aflF may also play a role in the conversion of NOR to AVN. The cytochrome P450 monooxygenase aflG then catalyzes the hydroxylation of AVN to 5'hydroxyaverantin (HAVN). The next step is performed by the 5'-hydroxyaverantin dehydrogenase aflH that transforms HAVN to 5'-oxoaverantin (OAVN) which is further converted to averufin (AVF) by aflK that plays a dual role in the pathway, as a 5'-oxoaverantin cyclase that mediates conversion of 5'-oxoaverantin, as well as a versicolorin B synthase in a later step in the pathway. The averufin oxidase aflI catalyzes the conversion of AVF to versiconal hemiacetal acetate (VHA). VHA is then the substrate for the versiconal hemiacetal acetate esterase aflJ to yield versiconal (VAL). Versicolorin B synthase aflK then converts VAL to versicolorin B (VERB) by closing the bisfuran ring of aflatoxin which is required for DNA-binding, thus giving to aflatoxin its activity as a mutagen. Then, the activity of the versicolorin B desaturase aflL leads to versicolorin A (VERA). A branch point starts from VERB since it can also be converted to dihydrodemethylsterigmatocystin (DMDHST), probably also by aflL, VERA being a precursor for aflatoxins B1 and G1, and DMDHST for aflatoxins B2 and G2. Next, the versicolorin reductase aflM and the cytochrome P450 monooxygenase aflN are involved in conversion of VERA to demethylsterigmatocystin (DMST). AflX and aflY seem also involved in this step, through probable aflX-mediated epoxide ring-opening step following versicolorin A oxidation and aflY-mediated Baeyer-Villiger oxidation required for the formation of the xanthone ring. The methyltransferase aflO then leads to the modification of DMST to sterigmatocystin (ST), and of DMDHST to dihydrosterigmatocystin (DHST). Both ST and DHST are then substrates of the O-methyltransferase aflP to yield O-methylsterigmatocystin (OMST) and dihydro-O-methylsterigmatocystin (DHOMST), respectively. Finally OMST is converted to aflatoxins B1 and G1, and DHOMST to aflatoxins B2 and G2, via the action of several enzymes including O-methylsterigmatocystin oxidoreductase aflQ, the cytochrome P450 monooxygenase aflU, but also the NADH-dependent flavin oxidoreductase nadA which is specifically required for the synthesis of AFG1. The polypeptide is Versicolorin B desaturase (Aspergillus parasiticus (strain ATCC 56775 / NRRL 5862 / SRRC 143 / SU-1)).